We begin with the raw amino-acid sequence, 295 residues long: Cyclin-G1 (295 aa).

Belongs to the cyclin family. Cyclin G subfamily. High levels in skeletal muscle, ovary, kidney and colon.

It is found in the nucleus. Functionally, may play a role in growth regulation. Is associated with G2/M phase arrest in response to DNA damage. May be an intermediate by which p53 mediates its role as an inhibitor of cellular proliferation. In Homo sapiens (Human), this protein is Cyclin-G1 (CCNG1).